Here is a 154-residue protein sequence, read N- to C-terminus: UPF0225 protein YE2246 (154 aa).

The protein belongs to the UPF0225 family.

This is UPF0225 protein YE2246 from Yersinia enterocolitica serotype O:8 / biotype 1B (strain NCTC 13174 / 8081).